The following is a 333-amino-acid chain: MLTYKEAGVNIEEGYRSVKLIKEYAKKTMSEYVLNGLGSFAGMVELPEGYKKPVLVSGTDGVGTKLDIACKKRKFDTVGIDCVAMCVNDILCHGAKPLFFLDYIACGKLEAEVSSDLVKGVAEGCIESQCSLIGGETAEMPGMYKEGDYDIAGFAVGIVDKDKIINGKDIKSGDKLIGIASSGVHSNGYSLIRKVFKNLDEDFNGKAIWEELLTPTKIYVKPVLSLLEKFNIKGMAHVTGGGFYENLPRMLSKEGLSIVINKNSYEIPEIFKKLMELGVKEEEMYNTFNMGIGFVLCVEEDEVEEVLKELSKQGEKAFEIGYINAGGEGVCIK.

The protein belongs to the AIR synthase family.

It is found in the cytoplasm. It carries out the reaction 2-formamido-N(1)-(5-O-phospho-beta-D-ribosyl)acetamidine + ATP = 5-amino-1-(5-phospho-beta-D-ribosyl)imidazole + ADP + phosphate + H(+). It functions in the pathway purine metabolism; IMP biosynthesis via de novo pathway; 5-amino-1-(5-phospho-D-ribosyl)imidazole from N(2)-formyl-N(1)-(5-phospho-D-ribosyl)glycinamide: step 2/2. The protein is Phosphoribosylformylglycinamidine cyclo-ligase of Clostridium perfringens (strain ATCC 13124 / DSM 756 / JCM 1290 / NCIMB 6125 / NCTC 8237 / Type A).